A 380-amino-acid polypeptide reads, in one-letter code: MRMQTKLIHGGINEDATTGAVSVPIYQTSTYRQDAIGRHKGYEYSRSGNPTRFALEELIADLEGGVKGFAFASGLAGIHAVFSLLQSGDHVLLGDDVYGGNFRLFNKVLVKNGLSCTIIDTSDLSQIKKAIKPNTKALYLETPSNPLLKITDLAQCASVAKEHNLLTIVDNTFATPYCQNPLLLGTDIVAHNGTKYLGGHSDVVAGLVTTNNEALAQEFDFFQNAIGGVLGLQDSWLLQRGIKTLGLRMEAHQKNALCVAEFLEKHPKVERVYYPGLPTHPNHELAKAQMRGFSGMFSFTLKNDSEAVAFVESLKLFILGESLGGVESLVGIPALMTHACIPKAQREAAGIRDGLVRLSVGIEHEQDLLEDLDQAFAKIS.

N6-(pyridoxal phosphate)lysine is present on lysine 195.

The protein belongs to the trans-sulfuration enzymes family. Homotetramer. It depends on pyridoxal 5'-phosphate as a cofactor.

It localises to the cytoplasm. The enzyme catalyses O-succinyl-L-homoserine + L-cysteine = L,L-cystathionine + succinate + H(+). Its function is as follows. Catalyzes the formation of L-cystathionine from O-succinyl-L-homoserine (OSHS) and L-cysteine, via a gamma-replacement reaction. In the absence of thiol, catalyzes gamma-elimination to form 2-oxobutanoate, succinate and ammonia. This is Cystathionine gamma-synthase (metB) from Helicobacter pylori (strain J99 / ATCC 700824) (Campylobacter pylori J99).